A 282-amino-acid polypeptide reads, in one-letter code: Major surface antigen 4 (282 aa).

An N-terminal signal peptide occupies residues 1–29 (MNYRELFTGGLSAATVCACSLLVSGAVVA).

The protein belongs to the surface antigen msp4 family.

In Anaplasma marginale, this protein is Major surface antigen 4 (msp4).